The following is a 196-amino-acid chain: Large ribosomal subunit protein eL15 (196 aa).

A disordered region spans residues 156-196; sequence HRGRAERGKTSAGRKGRGMRTRGRGTEKTRPSIRSHANQGK. Residues 167 to 178 show a composition bias toward basic residues; sequence AGRKGRGMRTRG.

Belongs to the eukaryotic ribosomal protein eL15 family.

This is Large ribosomal subunit protein eL15 from Methanoregula boonei (strain DSM 21154 / JCM 14090 / 6A8).